The sequence spans 216 residues: Adenylate kinase (216 aa).

ATP is bound at residue 10–15 (GSGKGT). The NMP stretch occupies residues 30-59 (STGEILRKEIKKNKKTKKYIKKTINKGKLI). AMP-binding positions include T31, R36, 57 to 59 (KLI), 85 to 88 (GFPR), and Q92. The interval 121–158 (GRLIHASSGRTYHKIFNPPKIKNKDDITQEKLCSRNDD) is LID. Residues R122 and 131–132 (TY) each bind ATP. Positions 155 and 166 each coordinate AMP. Q196 is a binding site for ATP.

It belongs to the adenylate kinase family. Monomer.

It localises to the cytoplasm. It catalyses the reaction AMP + ATP = 2 ADP. The protein operates within purine metabolism; AMP biosynthesis via salvage pathway; AMP from ADP: step 1/1. Its function is as follows. Catalyzes the reversible transfer of the terminal phosphate group between ATP and AMP. Plays an important role in cellular energy homeostasis and in adenine nucleotide metabolism. This is Adenylate kinase from Buchnera aphidicola subsp. Cinara cedri (strain Cc).